The sequence spans 117 residues: G antigen 6 (117 aa).

The disordered stretch occupies residues 1–117 (MSWRGRSTYY…PEEGEKQSQC (117 aa)). 2 stretches are compositionally biased toward acidic residues: residues 32–45 (FSDE…EEGE) and 87–96 (ECEDGPDGQE). A compositionally biased stretch (basic and acidic residues) spans 103-117 (EEVKTPEEGEKQSQC).

The protein belongs to the GAGE family. Expressed in a variety of tumor tissues but not in normal tissues, except testis.

The protein is G antigen 6 (GAGE6) of Homo sapiens (Human).